Consider the following 371-residue polypeptide: Trans-enoyl reductase calK (371 aa).

Residue 51–54 coordinates NADP(+); it reads NDHK. 145 to 152 is a binding site for substrate; sequence WSTISLAF. NADP(+) contacts are provided by residues 181–184, 204–207, Tyr222, and 269–270; these read GTAS, SNQS, and LE. 289–293 serves as a coordination point for substrate; that stretch reads GFQVL. An NADP(+)-binding site is contributed by 359–360; it reads VR.

The protein belongs to the zinc-containing alcohol dehydrogenase family. Monomer.

Its pathway is secondary metabolite biosynthesis. In terms of biological role, trans-enoyl reductase; part of the gene cluster that mediates the biosynthesis of calbistrin A and related compounds. Calbistrin A is a secondary metabolite with an interesting structure that was recently found to have bioactivity against leukemia cells. It consists of two polyketides linked by an ester bond: a bicyclic decalin containing polyketide and a linear 12 carbon dioic acid structure. The polyketide synthase calA is probably responsible for forming the decalin moiety. Because calA lacks a designated enoylreductase (ER) domain, the required activity is provided by the trans-enoyl reductase calK. Following release from the PKS, calF then probably catalyzes the oxidation and the subsequent Diels Alder cycloisomerization that lead to the formation of the decalin moiety. The decalin polyketide backbone includes two C-methyl groups, at C7 and C11 in backbone, of which the C7 position is probably methylated by the methyltransferase domain of calA. A candidate for adding the methyl group at C11, if not done by CalA, is the cluster methyltransferase calH. Several additional tailoring enzymes within the cluster could be involved in the modification of the decalin polyketide product. Those include the 3 cytochrome P450 monooxygenases CalE, CalG and CalL, of which one might be responsible for the introduction of the extra hydroxyl group attached to the backbone of the decalin moiety, at position C9 in the backbone, that allows for attachment of the linear moiety. One tailoring enzyme activity that is expected to be involved in biosynthesis of calbistrin is an acyltransferase for connecting the two polyketide synthase products, and which could be performed by the cluster acyltransferase calJ. The enzyme responsible for the biosynthesis of the linear moiety, probably a second PKS, has not been identified yet. The sequence is that of Trans-enoyl reductase calK from Penicillium decumbens.